A 379-amino-acid chain; its full sequence is Cytochrome b (379 aa).

The next 4 helical transmembrane spans lie at 33–53, 77–98, 113–133, and 178–198; these read FGSL…FLAM, WFLR…YLHI, WNVG…GYVL, and FFTF…IHLL. Heme b is bound by residues histidine 83 and histidine 97. Heme b is bound by residues histidine 182 and histidine 196. Histidine 201 contacts a ubiquinone. A run of 4 helical transmembrane segments spans residues 226 to 246, 288 to 308, 320 to 340, and 347 to 367; these read YKDL…TLFS, LGGV…PITH, LTQI…WIGG, and FIII…VFAP.

Belongs to the cytochrome b family. As to quaternary structure, the cytochrome bc1 complex contains 3 respiratory subunits (MT-CYB, CYC1 and UQCRFS1), 2 core proteins (UQCRC1 and UQCRC2) and probably 6 low-molecular weight proteins. The cofactor is heme b.

It localises to the mitochondrion inner membrane. Component of the ubiquinol-cytochrome c reductase complex (complex III or cytochrome b-c1 complex) that is part of the mitochondrial respiratory chain. The b-c1 complex mediates electron transfer from ubiquinol to cytochrome c. Contributes to the generation of a proton gradient across the mitochondrial membrane that is then used for ATP synthesis. This chain is Cytochrome b (mt-cyb), found in Amia calva (Bowfin).